Reading from the N-terminus, the 249-residue chain is ATP synthase subunit a (249 aa).

A run of 6 helical transmembrane segments spans residues 30–50 (SAYM…GSAG), 84–104 (FFPL…VGII), 113–133 (HIIV…IYGF), 143–163 (IFVP…IEVF), 196–216 (LLAG…GMVV), and 221–241 (LELL…CIYL).

The protein belongs to the ATPase A chain family. As to quaternary structure, F-type ATPases have 2 components, CF(1) - the catalytic core - and CF(0) - the membrane proton channel. CF(1) has five subunits: alpha(3), beta(3), gamma(1), delta(1), epsilon(1). CF(0) has four main subunits: a, b, b' and c.

It is found in the cell inner membrane. Its function is as follows. Key component of the proton channel; it plays a direct role in the translocation of protons across the membrane. The chain is ATP synthase subunit a from Rhodopseudomonas palustris (strain BisA53).